We begin with the raw amino-acid sequence, 231 residues long: Isoprenyl transferase (231 aa).

Residue Asp14 is part of the active site. Residue Asp14 coordinates Mg(2+). Substrate is bound by residues 15–18 (GNGR), Trp19, Arg27, His31, and 59–61 (STE). The active-site Proton acceptor is Asn62. Substrate contacts are provided by residues Trp63, Arg65, Arg176, and 182 to 184 (RIS). Position 195 (Glu195) interacts with Mg(2+).

This sequence belongs to the UPP synthase family. Homodimer. Requires Mg(2+) as cofactor.

Catalyzes the condensation of isopentenyl diphosphate (IPP) with allylic pyrophosphates generating different type of terpenoids. This Aquifex aeolicus (strain VF5) protein is Isoprenyl transferase.